The chain runs to 416 residues: LL-diaminopimelate aminotransferase (416 aa).

Tyr-15 and Gly-42 together coordinate substrate. Residues Tyr-72, Ser-108–Lys-109, Tyr-132, Asn-187, Tyr-218, and Ser-246–Ser-248 each bind pyridoxal 5'-phosphate. Residues Lys-109, Tyr-132, and Asn-187 each contribute to the substrate site. Residue Lys-249 is modified to N6-(pyridoxal phosphate)lysine. 2 residues coordinate pyridoxal 5'-phosphate: Arg-257 and Asn-292. 2 residues coordinate substrate: Asn-292 and Arg-388.

It belongs to the class-I pyridoxal-phosphate-dependent aminotransferase family. LL-diaminopimelate aminotransferase subfamily. As to quaternary structure, homodimer. Requires pyridoxal 5'-phosphate as cofactor.

It carries out the reaction (2S,6S)-2,6-diaminopimelate + 2-oxoglutarate = (S)-2,3,4,5-tetrahydrodipicolinate + L-glutamate + H2O + H(+). It participates in amino-acid biosynthesis; L-lysine biosynthesis via DAP pathway; LL-2,6-diaminopimelate from (S)-tetrahydrodipicolinate (aminotransferase route): step 1/1. In terms of biological role, involved in the synthesis of meso-diaminopimelate (m-DAP or DL-DAP), required for both lysine and peptidoglycan biosynthesis. Catalyzes the direct conversion of tetrahydrodipicolinate to LL-diaminopimelate. The polypeptide is LL-diaminopimelate aminotransferase (Synechococcus sp. (strain JA-2-3B'a(2-13)) (Cyanobacteria bacterium Yellowstone B-Prime)).